A 452-amino-acid chain; its full sequence is Ribosomal L1 domain-containing protein 1 (452 aa).

N-acetylmethionine is present on Met1. Residues Lys119 and Lys253 each participate in a glycyl lysine isopeptide (Lys-Gly) (interchain with G-Cter in SUMO2) cross-link. Residues 277-350 adopt a coiled-coil conformation; the sequence is LRSLRKQELK…QKVTEECEEA (74 aa). The segment at 283-452 is disordered; that stretch reads QELKKRKREN…DKKTKAAHSN (170 aa). Residues 292 to 301 are compositionally biased toward basic and acidic residues; it reads NAKLKKESKM. Positions 309 to 319 are enriched in polar residues; it reads ATSLLTQSGLA. Basic residues predominate over residues 330 to 341; that stretch reads QKKKTNKAHKKQ. Phosphothreonine is present on residues Thr334, Thr344, Thr360, Thr399, and Thr407. Residues 414–423 show a composition bias toward basic and acidic residues; sequence KDVQEFRKPE. Residues 425–440 are compositionally biased toward polar residues; the sequence is SSFSTPRKSGKKASNT. Thr429 is subject to Phosphothreonine. An N6-acetyllysine modification is found at Lys432. Ser433 carries the phosphoserine modification.

The protein belongs to the universal ribosomal protein uL1 family. Highly divergent. In terms of assembly, interacts with ING1. Interacts with KPNA7 and KPNA2.

It is found in the nucleus. It localises to the nucleolus. In terms of biological role, regulates cellular senescence through inhibition of PTEN translation. Acts as a pro-apoptotic regulator in response to DNA damage. This chain is Ribosomal L1 domain-containing protein 1, found in Mus musculus (Mouse).